The sequence spans 358 residues: Heterogeneous nuclear ribonucleoprotein A2 homolog 2 (358 aa).

RRM domains follow at residues 9–92 (RKLF…ESAK) and 100–179 (KKLF…LSKQ). 2 disordered regions span residues 182 to 217 (QDVQ…FRGG) and 333 to 358 (YGGG…RNRY). Residues 193–217 (GNFGFGDSRGGGNFGSGPGGNFRGG) are compositionally biased toward gly residues. The nuclear targeting sequence stretch occupies residues 309–352 (QQSSSYGPMKSGGNFGGNRSMGGPYGGGNYGPGNGSGASGGGGY).

It localises to the nucleus. In terms of biological role, forms complexes (ribonucleosomes) with at least 20 other different hnRNP and heterogeneous nuclear RNA in the nucleus. In Xenopus laevis (African clawed frog), this protein is Heterogeneous nuclear ribonucleoprotein A2 homolog 2.